The chain runs to 429 residues: MLTTLNKALDTIHRLAAETVWSEGVTPMKIGDSGEFGFWPKGFSVGATAGNIRYSGRDDMMLIVSDSPASAAALFTTNLCCAAPVVLSRNHLQQSAASMRAIVCNSGNANAATGKQGMADAQAMADAVAEQLSIKPEEVLVASTGVIGQLLPMERVHAGIVALPATLQSNSVLGAVSAIMTTDTFPKFYAVDVALSSGTVRLCGIAKGSGMICPNMATMLGFLATDAAIAPELLQTLLSEANRKSFNAITVDGDTSTNDMVAMLASGAGAEVVAGSKDEALFSAALQSLMILLAKLIVIDGEGATKLVEITVKGAVSNEEAELAARTIANSSLVKTAIHGEDANWGRIIAAAGRSGARFNEDELELWFNEMPILKKGLIADFSEDEAAIILAQPSYSITLSLGNGSGSATLWSCDLSKEYVEINGSYRS.

Positions 181, 207, 218, 302, 424, and 429 each coordinate substrate. Thr-218 functions as the Nucleophile in the catalytic mechanism.

This sequence belongs to the ArgJ family. As to quaternary structure, heterotetramer of two alpha and two beta chains.

It is found in the cytoplasm. The enzyme catalyses N(2)-acetyl-L-ornithine + L-glutamate = N-acetyl-L-glutamate + L-ornithine. The catalysed reaction is L-glutamate + acetyl-CoA = N-acetyl-L-glutamate + CoA + H(+). It participates in amino-acid biosynthesis; L-arginine biosynthesis; L-ornithine and N-acetyl-L-glutamate from L-glutamate and N(2)-acetyl-L-ornithine (cyclic): step 1/1. It functions in the pathway amino-acid biosynthesis; L-arginine biosynthesis; N(2)-acetyl-L-ornithine from L-glutamate: step 1/4. In terms of biological role, catalyzes two activities which are involved in the cyclic version of arginine biosynthesis: the synthesis of N-acetylglutamate from glutamate and acetyl-CoA as the acetyl donor, and of ornithine by transacetylation between N(2)-acetylornithine and glutamate. The sequence is that of Arginine biosynthesis bifunctional protein ArgJ from Chlorobium chlorochromatii (strain CaD3).